The primary structure comprises 101 residues: MLTLTHYLVLAAVMFAISVLGIFLNRKNVIVLLMAIELMLLAVNFNFIAFAHYFGDTAGQIFVFFVLTVAAAESAIGLAILVVLFRNLATINVEDLGQLKG.

The next 3 helical transmembrane spans lie at 4–24 (LTHY…GIFL), 30–50 (IVLL…FIAF), and 61–81 (IFVF…LAIL).

The protein belongs to the complex I subunit 4L family. In terms of assembly, NDH-1 is composed of 14 different subunits. Subunits NuoA, H, J, K, L, M, N constitute the membrane sector of the complex.

It localises to the cell inner membrane. It catalyses the reaction a quinone + NADH + 5 H(+)(in) = a quinol + NAD(+) + 4 H(+)(out). In terms of biological role, NDH-1 shuttles electrons from NADH, via FMN and iron-sulfur (Fe-S) centers, to quinones in the respiratory chain. The immediate electron acceptor for the enzyme in this species is believed to be ubiquinone. Couples the redox reaction to proton translocation (for every two electrons transferred, four hydrogen ions are translocated across the cytoplasmic membrane), and thus conserves the redox energy in a proton gradient. The protein is NADH-quinone oxidoreductase subunit K of Laribacter hongkongensis (strain HLHK9).